Here is a 150-residue protein sequence, read N- to C-terminus: Protein E6 (150 aa).

Zinc fingers lie at residues 31–67 and 104–140; these read CIWC…CAFC and CALC…CTHC.

It belongs to the papillomaviridae E6 protein family. As to quaternary structure, forms homodimers. Interacts with ubiquitin-protein ligase UBE3A/E6-AP; this interaction stimulates UBE3A ubiquitin activity. Interacts with host TP53 and EP300; this interaction inhibits TP53 activity.

The protein localises to the host cytoplasm. The protein resides in the host nucleus. Its function is as follows. Plays a major role in the induction and maintenance of cellular transformation. E6 associates with host UBE3A/E6-AP ubiquitin-protein ligase and modulates its activity. Sequesters tumor suppressor TP53 in the host cytoplasm and modulates its activity by interacting with host EP300 that results in the reduction of TP53 acetylation and activation. In turn, apoptosis induced by DNA damage is inhibited. E6 also protects host keratinocytes from apoptosis by mediating the degradation of host BAK1. May also inhibit host immune response. The chain is Protein E6 from Homo sapiens (Human).